The following is a 215-amino-acid chain: Urease accessory protein UreG (215 aa).

11 to 18 contributes to the GTP binding site; it reads GPVGAGKS.

The protein belongs to the SIMIBI class G3E GTPase family. UreG subfamily. In terms of assembly, homodimer. UreD, UreF and UreG form a complex that acts as a GTP-hydrolysis-dependent molecular chaperone, activating the urease apoprotein by helping to assemble the nickel containing metallocenter of UreC. The UreE protein probably delivers the nickel.

It localises to the cytoplasm. Facilitates the functional incorporation of the urease nickel metallocenter. This process requires GTP hydrolysis, probably effectuated by UreG. The sequence is that of Urease accessory protein UreG from Cenarchaeum symbiosum (strain A).